Reading from the N-terminus, the 320-residue chain is Major pollen allergen Pha a 5.1 (320 aa).

A signal peptide spans 1–23 (MAVQKYTMALFLAVALVAGPAAP). The segment at 21–45 (AAPTPPTPRTPPLLPPPRARDKATL) is disordered. Pro residues predominate over residues 22-37 (APTPPTPRTPPLLPPP).

This sequence belongs to the Poa p IX/Phl p VI allergen family.

The polypeptide is Major pollen allergen Pha a 5.1 (Phalaris aquatica (Canary grass)).